A 136-amino-acid polypeptide reads, in one-letter code: Protein NrdI (136 aa).

Belongs to the NrdI family.

In terms of biological role, probably involved in ribonucleotide reductase function. The polypeptide is Protein NrdI (Citrobacter koseri (strain ATCC BAA-895 / CDC 4225-83 / SGSC4696)).